The chain runs to 103 residues: Serine rich endogenous peptide 9 (103 aa).

Positions 1–25 (MENIFFSKLTQVFIVALLCIFIYRT) are cleaved as a signal peptide. The tract at residues 54 to 103 (IYVKPPPLKSKDSNQKGKRGETYYKPNSEIGTGPSHSGHGGSSIEHVSSP) is disordered. Residues 62-75 (KSKDSNQKGKRGET) show a composition bias toward basic and acidic residues. Residues 82-96 (EIGTGPSHSGHGGSS) carry the SCOOP motif motif. The segment covering 84–103 (GTGPSHSGHGGSSIEHVSSP) has biased composition (low complexity). A SxS motif essential for MIK2 binding motif is present at residues 88–90 (SHS).

The protein belongs to the serine rich endogenous peptide (SCOOP) phytocytokine family. As to quaternary structure, interacts with MIK2 (via extracellular leucine-rich repeat domain); this interaction triggers the formation of complex between MIK2 and the BAK1/SERK3 and SERK4 coreceptors, and subsequent BAK1 activation by phosphorylation. As to expression, mostly expressed in seedlings shoots and roots, and, to a lower extent, in leaves, but barely in flowers.

The protein resides in the cell membrane. It localises to the secreted. Its subcellular location is the extracellular space. It is found in the apoplast. In terms of biological role, brassicaceae-specific phytocytokine (plant endogenous peptide released into the apoplast) perceived by MIK2 in a BAK1/SERK3 and SERK4 coreceptors-dependent manner, that modulates various physiological and antimicrobial processes including growth prevention and reactive oxygen species (ROS) response regulation. This Arabidopsis thaliana (Mouse-ear cress) protein is Serine rich endogenous peptide 9.